The primary structure comprises 372 residues: Ligninase LG6 (372 aa).

The first 21 residues, 1-21, serve as a signal peptide directing secretion; it reads MALKQLAAAVALALSIQAAQG. A propeptide spanning residues 22 to 28 is cleaved from the precursor; sequence AAVKEKR. Disulfide bonds link C31–C43 and C62–C148. H75 functions as the Proton acceptor in the catalytic mechanism. 4 residues coordinate Ca(2+): D76, G94, D96, and S98. H204 is a heme b binding site. The Ca(2+) site is built by S205, D222, T224, V227, and D229. C277 and C345 form a disulfide bridge. An N-linked (GlcNAc...) asparagine glycan is attached at N285. The span at 352–361 shows a compositional bias: low complexity; sequence TLTTLPGPET. The disordered stretch occupies residues 352–372; that stretch reads TLTTLPGPETSVQRIQPPPGA.

The protein belongs to the peroxidase family. Ligninase subfamily. Heme b serves as cofactor. Ca(2+) is required as a cofactor.

It catalyses the reaction 1-(3,4-dimethoxyphenyl)-2-(2-methoxyphenoxy)propane-1,3-diol + H2O2 = 3,4-dimethoxybenzaldehyde + guaiacol + glycolaldehyde + H2O. It carries out the reaction 2 (3,4-dimethoxyphenyl)methanol + H2O2 = 2 (3,4-dimethoxyphenyl)methanol radical + 2 H2O. It functions in the pathway secondary metabolite metabolism; lignin degradation. Functionally, depolymerization of lignin. Catalyzes the C(alpha)-C(beta) cleavage of the propyl side chains of lignin. This Phanerodontia chrysosporium (White-rot fungus) protein is Ligninase LG6 (GLG6).